The following is a 1376-amino-acid chain: DNA-directed RNA polymerase subunit beta (1376 aa).

Over residues 1357–1368 (NSKTGRQTNPGT) the composition is skewed to polar residues. Positions 1357-1376 (NSKTGRQTNPGTRENLPAAE) are disordered.

The protein belongs to the RNA polymerase beta chain family. The RNAP catalytic core consists of 2 alpha, 1 beta, 1 beta' and 1 omega subunit. When a sigma factor is associated with the core the holoenzyme is formed, which can initiate transcription.

The enzyme catalyses RNA(n) + a ribonucleoside 5'-triphosphate = RNA(n+1) + diphosphate. DNA-dependent RNA polymerase catalyzes the transcription of DNA into RNA using the four ribonucleoside triphosphates as substrates. The chain is DNA-directed RNA polymerase subunit beta from Azorhizobium caulinodans (strain ATCC 43989 / DSM 5975 / JCM 20966 / LMG 6465 / NBRC 14845 / NCIMB 13405 / ORS 571).